A 241-amino-acid chain; its full sequence is Homeobox protein TGIF2LX (241 aa).

2 disordered regions span residues 1-58 (MEAA…GNLP) and 126-210 (TGKD…SPEE). Over residues 21–39 (AKTQSPAQDTSIMSRNNAD) the composition is skewed to polar residues. Residues 48 to 111 (EHKKKRKGNL…INARRRILPD (64 aa)) constitute a DNA-binding region (homeobox; TALE-type). Low complexity predominate over residues 195 to 206 (VSVTSPSSPELV).

This sequence belongs to the TALE/TGIF homeobox family. As to expression, specifically expressed in adult testis.

The protein resides in the nucleus. In terms of biological role, may have a transcription role in testis. This chain is Homeobox protein TGIF2LX (TGIF2LX), found in Homo sapiens (Human).